Here is a 266-residue protein sequence, read N- to C-terminus: Mitochondrial S-adenosylmethionine carrier protein (266 aa).

Solcar repeat units lie at residues 4–77, 85–167, and 176–264; these read RELC…AKRF, LSPI…LKNL, and VDCW…VRSS. The next 6 membrane-spanning stretches (helical) occupy residues 5–25, 49–69, 84–104, 141–161, 181–201, and 237–257; these read ELCA…LILF, IYAG…AFFV, YLSP…ACLI, RGYK…FPLW, SAVC…PLDV, and FAGV…FLGA.

It belongs to the mitochondrial carrier (TC 2.A.29) family.

It localises to the mitochondrion inner membrane. The catalysed reaction is S-adenosyl-L-homocysteine(out) + S-adenosyl-L-methionine(in) = S-adenosyl-L-homocysteine(in) + S-adenosyl-L-methionine(out). Functionally, mitochondrial S-adenosyl-L-methionine/S-adenosyl-L-homocysteine antiporter. Mediates the exchange of cytosolic S-adenosyl-L-methionine, the predominant methyl-group donor for macromolecule methylation processes, for mitochondrial S-adenosylhomocysteine(SAH), a by-product of methylation reactions. This is Mitochondrial S-adenosylmethionine carrier protein (slc25a26) from Xenopus laevis (African clawed frog).